A 121-amino-acid chain; its full sequence is Large ribosomal subunit protein bL12 (121 aa).

The protein belongs to the bacterial ribosomal protein bL12 family. Homodimer. Part of the ribosomal stalk of the 50S ribosomal subunit. Forms a multimeric L10(L12)X complex, where L10 forms an elongated spine to which 2 to 4 L12 dimers bind in a sequential fashion. Binds GTP-bound translation factors.

Functionally, forms part of the ribosomal stalk which helps the ribosome interact with GTP-bound translation factors. Is thus essential for accurate translation. The polypeptide is Large ribosomal subunit protein bL12 (Clostridium perfringens (strain ATCC 13124 / DSM 756 / JCM 1290 / NCIMB 6125 / NCTC 8237 / Type A)).